Consider the following 358-residue polypeptide: NADH-quinone oxidoreductase subunit H (358 aa).

8 helical membrane passes run 30-50 (VVIG…LIYM), 96-116 (FLYN…FSCL), 129-149 (VGVF…LLAG), 168-188 (IISY…LMGT), 201-221 (GWFI…YLIA), 265-285 (FIVA…LHIV), 297-317 (IPGF…LMWI), and 336-356 (YLVP…VFGL).

It belongs to the complex I subunit 1 family. NDH-1 is composed of 14 different subunits. Subunits NuoA, H, J, K, L, M, N constitute the membrane sector of the complex.

Its subcellular location is the cell inner membrane. The enzyme catalyses a quinone + NADH + 5 H(+)(in) = a quinol + NAD(+) + 4 H(+)(out). In terms of biological role, NDH-1 shuttles electrons from NADH, via FMN and iron-sulfur (Fe-S) centers, to quinones in the respiratory chain. The immediate electron acceptor for the enzyme in this species is believed to be ubiquinone. Couples the redox reaction to proton translocation (for every two electrons transferred, four hydrogen ions are translocated across the cytoplasmic membrane), and thus conserves the redox energy in a proton gradient. This subunit may bind ubiquinone. This chain is NADH-quinone oxidoreductase subunit H, found in Bacteroides fragilis (strain ATCC 25285 / DSM 2151 / CCUG 4856 / JCM 11019 / LMG 10263 / NCTC 9343 / Onslow / VPI 2553 / EN-2).